The following is a 634-amino-acid chain: MINITLPDGSRREFESPVSVMQVAQSIGAGLAKATIAGQVDGQLVDASDVIDHDASLRIITAKDAEGVEIIRHSCAHLVGHAVKQLYPEVKMVIGPVIAEGFYYDIYSERPFTPEDMAAIEQRMQELIAQDYDVIKKVTPRAEVIEVFAQRGEEYKLRLIEDMSEDITAMGLYYHQEYVDMCRGPHVPNTRFLKAFKLTRISGAYWRGDAKNEQLQRIYGTAWADKKQLDAYILRMEEADKRDHRRIGKAQDLFHLQEEAPGLVFWHPKGWSLWQVVEQYMRKVYRDSGYGEVRCPQILDVSLWQKSGHWDNYQDAMFFTESEKRTYAVKPMNCPGHVQVFNQGLHSYRDLPIRYGEFGACHRNEPSGALHGILRVRGFTQDDGHVFCLEPQIESEVTAFHQQALAVYTAFGFDDIQIKIALRPEKRLGDDATWDKAEAALRSALGVCGVEWQELPGEGAFYGPKIEYHLKDAIGRTWQLGTMQVDFMMPGRLGAEYVDENSQKKHPVMLHRAIVGSMERFIGILIEHHAGAFPSWLAPVQVVVANITDAQAEYVDSVRKTLANQGFRVSADLRNEKIGYKIREHTLQRVPYLLVVGDREKENGAVAVRTRSGEDLGTMTVSAFIERLQAEQAA.

The TGS domain maps to 1-61 (MINITLPDGS…DHDASLRIIT (61 aa)). Residues 243–534 (DHRRIGKAQD…LIEHHAGAFP (292 aa)) form a catalytic region. C334, H385, and H511 together coordinate Zn(2+).

The protein belongs to the class-II aminoacyl-tRNA synthetase family. As to quaternary structure, homodimer. Zn(2+) is required as a cofactor.

It localises to the cytoplasm. It catalyses the reaction tRNA(Thr) + L-threonine + ATP = L-threonyl-tRNA(Thr) + AMP + diphosphate + H(+). Functionally, catalyzes the attachment of threonine to tRNA(Thr) in a two-step reaction: L-threonine is first activated by ATP to form Thr-AMP and then transferred to the acceptor end of tRNA(Thr). Also edits incorrectly charged L-seryl-tRNA(Thr). This Xanthomonas axonopodis pv. citri (strain 306) protein is Threonine--tRNA ligase.